Consider the following 250-residue polypeptide: Ubiquinone/menaquinone biosynthesis C-methyltransferase UbiE (250 aa).

S-adenosyl-L-methionine-binding positions include T73, D94, and D122–A123.

It belongs to the class I-like SAM-binding methyltransferase superfamily. MenG/UbiE family.

The enzyme catalyses a 2-demethylmenaquinol + S-adenosyl-L-methionine = a menaquinol + S-adenosyl-L-homocysteine + H(+). It carries out the reaction a 2-methoxy-6-(all-trans-polyprenyl)benzene-1,4-diol + S-adenosyl-L-methionine = a 5-methoxy-2-methyl-3-(all-trans-polyprenyl)benzene-1,4-diol + S-adenosyl-L-homocysteine + H(+). It participates in quinol/quinone metabolism; menaquinone biosynthesis; menaquinol from 1,4-dihydroxy-2-naphthoate: step 2/2. Its pathway is cofactor biosynthesis; ubiquinone biosynthesis. Functionally, methyltransferase required for the conversion of demethylmenaquinol (DMKH2) to menaquinol (MKH2) and the conversion of 2-polyprenyl-6-methoxy-1,4-benzoquinol (DDMQH2) to 2-polyprenyl-3-methyl-6-methoxy-1,4-benzoquinol (DMQH2). The sequence is that of Ubiquinone/menaquinone biosynthesis C-methyltransferase UbiE from Coxiella burnetii (strain CbuK_Q154) (Coxiella burnetii (strain Q154)).